Consider the following 101-residue polypeptide: Small ribosomal subunit protein uS14A (101 aa).

Residues 31-74 (IRKPSTPEADRAAAQAALQRLPRDASPVRLRNRDAADGRPRGHL) are disordered. Residues 61 to 70 (RNRDAADGRP) are compositionally biased toward basic and acidic residues.

The protein belongs to the universal ribosomal protein uS14 family. Part of the 30S ribosomal subunit. Contacts proteins S3 and S10.

Functionally, binds 16S rRNA, required for the assembly of 30S particles and may also be responsible for determining the conformation of the 16S rRNA at the A site. The polypeptide is Small ribosomal subunit protein uS14A (Nocardia farcinica (strain IFM 10152)).